Reading from the N-terminus, the 210-residue chain is ATP-dependent Clp protease proteolytic subunit (210 aa).

The active-site Nucleophile is the serine 107. Residue histidine 132 is part of the active site.

It belongs to the peptidase S14 family. As to quaternary structure, fourteen ClpP subunits assemble into 2 heptameric rings which stack back to back to give a disk-like structure with a central cavity, resembling the structure of eukaryotic proteasomes.

It localises to the cytoplasm. The enzyme catalyses Hydrolysis of proteins to small peptides in the presence of ATP and magnesium. alpha-casein is the usual test substrate. In the absence of ATP, only oligopeptides shorter than five residues are hydrolyzed (such as succinyl-Leu-Tyr-|-NHMec, and Leu-Tyr-Leu-|-Tyr-Trp, in which cleavage of the -Tyr-|-Leu- and -Tyr-|-Trp bonds also occurs).. In terms of biological role, cleaves peptides in various proteins in a process that requires ATP hydrolysis. Has a chymotrypsin-like activity. Plays a major role in the degradation of misfolded proteins. This chain is ATP-dependent Clp protease proteolytic subunit, found in Cereibacter sphaeroides (strain ATCC 17025 / ATH 2.4.3) (Rhodobacter sphaeroides).